Here is a 213-residue protein sequence, read N- to C-terminus: Kynurenine formamidase (213 aa).

W18 contributes to the substrate binding site. Residues H48, H52, and D54 each coordinate Zn(2+). Catalysis depends on H58, which acts as the Proton donor/acceptor. Residues H160 and E172 each contribute to the Zn(2+) site.

Belongs to the Cyclase 1 superfamily. KynB family. Homodimer. Requires Zn(2+) as cofactor.

The enzyme catalyses N-formyl-L-kynurenine + H2O = L-kynurenine + formate + H(+). Its pathway is amino-acid degradation; L-tryptophan degradation via kynurenine pathway; L-kynurenine from L-tryptophan: step 2/2. Its function is as follows. Catalyzes the hydrolysis of N-formyl-L-kynurenine to L-kynurenine, the second step in the kynurenine pathway of tryptophan degradation. This Burkholderia ambifaria (strain ATCC BAA-244 / DSM 16087 / CCUG 44356 / LMG 19182 / AMMD) (Burkholderia cepacia (strain AMMD)) protein is Kynurenine formamidase.